The sequence spans 478 residues: Aspartate ammonia-lyase (478 aa).

5 residues coordinate L-aspartate: Thr104, Ser143, Thr144, Asn145, and Thr190. Residues 320–329 are SS loop; it reads GSSIMPAKVN. Ser321 serves as the catalytic Proton acceptor. The L-aspartate site is built by Ser322 and Lys327.

The protein belongs to the class-II fumarase/aspartase family. Aspartase subfamily. Homotetramer.

It carries out the reaction L-aspartate = fumarate + NH4(+). Functionally, catalyzes the reversible conversion of L-aspartate to fumarate and ammonia. This chain is Aspartate ammonia-lyase (aspA), found in Escherichia coli O157:H7.